We begin with the raw amino-acid sequence, 258 residues long: Ubiquinone/menaquinone biosynthesis C-methyltransferase UbiE (258 aa).

S-adenosyl-L-methionine contacts are provided by residues threonine 81, aspartate 102, and asparagine 130–alanine 131.

This sequence belongs to the class I-like SAM-binding methyltransferase superfamily. MenG/UbiE family.

The catalysed reaction is a 2-demethylmenaquinol + S-adenosyl-L-methionine = a menaquinol + S-adenosyl-L-homocysteine + H(+). The enzyme catalyses a 2-methoxy-6-(all-trans-polyprenyl)benzene-1,4-diol + S-adenosyl-L-methionine = a 5-methoxy-2-methyl-3-(all-trans-polyprenyl)benzene-1,4-diol + S-adenosyl-L-homocysteine + H(+). Its pathway is quinol/quinone metabolism; menaquinone biosynthesis; menaquinol from 1,4-dihydroxy-2-naphthoate: step 2/2. The protein operates within cofactor biosynthesis; ubiquinone biosynthesis. Methyltransferase required for the conversion of demethylmenaquinol (DMKH2) to menaquinol (MKH2) and the conversion of 2-polyprenyl-6-methoxy-1,4-benzoquinol (DDMQH2) to 2-polyprenyl-3-methyl-6-methoxy-1,4-benzoquinol (DMQH2). This chain is Ubiquinone/menaquinone biosynthesis C-methyltransferase UbiE, found in Rhizobium meliloti (strain 1021) (Ensifer meliloti).